The primary structure comprises 219 residues: Small ribosomal subunit protein uS3c (219 aa).

Residues 39–111 form the KH type-2 domain; the sequence is IRKFLMEKIK…NSFFNVKINF (73 aa).

This sequence belongs to the universal ribosomal protein uS3 family. As to quaternary structure, part of the 30S ribosomal subunit.

It is found in the plastid. This is Small ribosomal subunit protein uS3c (rps3) from Euglena longa (Euglenophycean alga).